Here is a 557-residue protein sequence, read N- to C-terminus: Ras-specific guanine nucleotide-releasing factor RalGPS2 (557 aa).

The 239-residue stretch at 49-287 (TPEEYAGQIT…YKLSLKIEPG (239 aa)) folds into the Ras-GEF domain. The tract at residues 283-314 (KIEPGTSTPRSAASREDLVGPEVGASPQSGRK) is disordered. A phosphoserine mark is found at S293, S296, S308, and S311. T326 carries the phosphothreonine modification. The short motif at 327–330 (PPSP) is the PXXP element. S329 and S343 each carry phosphoserine. Position 361 is a phosphothreonine (T361). Residues 368–409 (RHLLDDSVMEPHAPSRGQAESSTLSSGISIGSSDGSELSEET) are disordered. At S374 the chain carries Phosphoserine. A compositionally biased stretch (low complexity) spans 387–403 (ESSTLSSGISIGSSDGS). One can recognise a PH domain in the interval 431–543 (AVTIQGVLRR…WFKHLSAACQ (113 aa)). The required for stimulation of nucleotide exchange by RALA stretch occupies residues 433–557 (TIQGVLRRKT…QVPTNLMTFE (125 aa)).

Interacts with the SH3 domains of GRB2 and PLCG1. Interacts with RALA.

Its subcellular location is the cytoplasm. It localises to the cell membrane. Functionally, guanine nucleotide exchange factor for the small GTPase RALA. May be involved in cytoskeletal organization. May also be involved in the stimulation of transcription in a Ras-independent fashion. The chain is Ras-specific guanine nucleotide-releasing factor RalGPS2 (RALGPS2) from Macaca fascicularis (Crab-eating macaque).